Reading from the N-terminus, the 217-residue chain is Peptide deformylase 1 (217 aa).

2 residues coordinate Fe cation: C129 and H171. Residue E172 is part of the active site. H175 lines the Fe cation pocket.

This sequence belongs to the polypeptide deformylase family. Fe(2+) is required as a cofactor.

The enzyme catalyses N-terminal N-formyl-L-methionyl-[peptide] + H2O = N-terminal L-methionyl-[peptide] + formate. Functionally, removes the formyl group from the N-terminal Met of newly synthesized proteins. Requires at least a dipeptide for an efficient rate of reaction. N-terminal L-methionine is a prerequisite for activity but the enzyme has broad specificity at other positions. In Bifidobacterium longum (strain NCC 2705), this protein is Peptide deformylase 1.